The primary structure comprises 523 residues: Cyclin-dependent kinase 17 (523 aa).

Ser-9 carries the post-translational modification Phosphoserine. The tract at residues 30–55 (TIEENSSKDNEPIVKNGRPPTSHSMH) is disordered. A phosphoserine mark is found at Ser-80, Ser-92, and Ser-105. Positions 103 to 123 (MGSDGESDQASGTSSDEVQSP) are disordered. Residues 110–123 (DQASGTSSDEVQSP) show a composition bias toward polar residues. A phosphoserine mark is found at Ser-137, Ser-146, Ser-165, and Ser-180. In terms of domain architecture, Protein kinase spans 192–473 (YIKLEKLGEG…AEEAMKHVYF (282 aa)). Residues 198 to 206 (LGEGTYATV) and Lys-221 each bind ATP. The active-site Proton acceptor is the Asp-313. Residues 501–523 (PGFRNSSYPETGHGKNRRQSMLF) form a disordered region. Basic residues predominate over residues 514 to 523 (GKNRRQSMLF).

Belongs to the protein kinase superfamily. CMGC Ser/Thr protein kinase family. CDC2/CDKX subfamily. As to quaternary structure, found in a complex containing CABLES1, CDK16 and TDRD7. Interacts with TDRD7.

It carries out the reaction L-seryl-[protein] + ATP = O-phospho-L-seryl-[protein] + ADP + H(+). It catalyses the reaction L-threonyl-[protein] + ATP = O-phospho-L-threonyl-[protein] + ADP + H(+). In terms of biological role, may play a role in terminally differentiated neurons. Has a Ser/Thr-phosphorylating activity for histone H1. The polypeptide is Cyclin-dependent kinase 17 (CDK17) (Homo sapiens (Human)).